A 3033-amino-acid chain; its full sequence is Genome polyprotein (3033 aa).

The residue at position 2 (Ser-2) is an N-acetylserine; by host. The interaction with STAT1 stretch occupies residues Ser-2 to Lys-23. Residues Ser-2–Pro-58 form an interaction with EIF2AK2/PKR region. The tract at residues Ser-2 to Arg-59 is interaction with DDX3X. Residues Ser-2 to Ser-75 are disordered. Short sequence motifs (nuclear localization signal) lie at residues Pro-5–Arg-13 and Pro-38–Arg-43. Basic residues predominate over residues Pro-7–Asn-16. The span at Gly-32–Arg-47 shows a compositional bias: low complexity. Ser-53 bears the Phosphoserine; by host mark. Short sequence motifs (nuclear localization signal) lie at residues Pro-58–Pro-64 and Pro-66–Ser-71. A phosphoserine; by host mark is found at Ser-99 and Ser-116. The tract at residues Pro-112 to Ala-152 is important for endoplasmic reticulum and mitochondrial localization. Positions Val-122–Ser-173 are interaction with APOA2. An important for lipid droplets localization region spans residues Tyr-164 to Arg-167. Positions Leu-178 to Ser-191 are cleaved as a propeptide — ER anchor for the core protein, removed in mature form by host signal peptidase. Residues Ser-190 to Gly-358 lie on the Lumenal side of the membrane. N-linked (GlcNAc...) asparagine; by host glycosylation is found at Asn-196 and Asn-209. The tract at residues Ile-265–Glu-296 is important for fusion. Residue Asn-305 is glycosylated (N-linked (GlcNAc...) asparagine; by host). A helical transmembrane segment spans residues Leu-359–Ala-379. The Lumenal portion of the chain corresponds to Gly-380 to Leu-729. The HVR1 stretch occupies residues Thr-385–Gln-412. N-linked (GlcNAc...) (high mannose) asparagine; by host glycosylation is found at Asn-417, Asn-423, and Asn-430. 4 disulfide bridges follow: Cys-429/Cys-554, Cys-452/Cys-459, Cys-488/Cys-496, and Cys-505/Cys-510. An N-linked (GlcNAc...) asparagine; by host glycan is attached at Asn-448. Positions Glu-475 to Asn-480 are HVR2. An N-linked (GlcNAc...) asparagine; by host glycan is attached at Asn-477. A CD81-binding 1 region spans residues Glu-482–Pro-495. Asn-534 carries N-linked (GlcNAc...) asparagine; by host glycosylation. The tract at residues Pro-546–Gly-553 is CD81-binding 2. Asn-558 is a glycosylation site (N-linked (GlcNAc...) asparagine; by host). 4 cysteine pairs are disulfide-bonded: Cys-566/Cys-571, Cys-585/Cys-589, Cys-601/Cys-624, and Cys-611/Cys-648. Residues Asn-627 and Asn-649 are each glycosylated (N-linked (GlcNAc...) (high mannose) asparagine; by host). Cys-656 and Cys-681 are oxidised to a cystine. Residues Gly-664 to Glu-675 are PKR/eIF2-alpha phosphorylation homology domain (PePHD). The chain crosses the membrane as a helical span at residues Leu-730–Ala-750. Topologically, residues Ala-751–Ala-761 are lumenal. The helical transmembrane segment at Ser-762 to Leu-782 threads the bilayer. Residues Lys-783–Val-786 lie on the Cytoplasmic side of the membrane. The helical transmembrane segment at Val-787–Leu-807 threads the bilayer. The Lumenal segment spans residues Pro-808–Ala-817. The helical transmembrane segment at Glu-818–Ala-838 threads the bilayer. The Cytoplasmic portion of the chain corresponds to Tyr-839 to His-885. A helical transmembrane segment spans residues Pro-886 to Leu-906. Residues Lys-907–Leu-932 are Lumenal-facing. Residues Lys-907–Leu-1030 enclose the Peptidase C18 domain. The protease NS2-3 stretch occupies residues Ala-908–Arg-1210. Residue Cys-926 is the site of S-palmitoyl cysteine; by host attachment. The chain crosses the membrane as a helical span at residues Ala-933–Ile-953. The tract at residues Ala-933–Ile-953 is interaction with host SCPS1. Topologically, residues Tyr-954–Thr-1661 are cytoplasmic. Residues His-956, Glu-976, and Cys-997 each act as for protease NS2 activity; shared with dimeric partner in the active site. A Peptidase S29 domain is found at Ala-1031–Pro-1212. Residues His-1087 and Asp-1111 each act as charge relay system; for serine protease NS3 activity in the active site. Positions 1127 and 1129 each coordinate Zn(2+). Residue Ser-1169 is the Charge relay system; for serine protease NS3 activity of the active site. Cys-1175 and His-1179 together coordinate Zn(2+). Residues Pro-1221–His-1373 form the Helicase ATP-binding domain. Ala-1234–Ser-1241 is a binding site for ATP. The Mg(2+) site is built by Ser-1241 and Glu-1321. The DECH box motif lies at Asp-1320–His-1323. Positions Gln-1490–Thr-1502 are RNA-binding. Residues Ser-1662–Gly-1682 traverse the membrane as a helical segment. The tract at residues Cys-1683–Asp-1694 is NS3-binding. The Cytoplasmic portion of the chain corresponds to Cys-1683–Thr-1809. A helical transmembrane segment spans residues Thr-1810–Ala-1830. Topologically, residues Thr-1831–Gly-1832 are lumenal. Residues Phe-1833–Val-1853 traverse the membrane as a helical segment. Asp-1854 is a topological domain (cytoplasmic). The helical transmembrane segment at Val-1855–Gly-1875 threads the bilayer. Topologically, residues Glu-1876–Asn-1885 are lumenal. Residues Leu-1886–Leu-1906 traverse the membrane as a helical segment. Topologically, residues Arg-1907 to Cys-1976 are cytoplasmic. Cys-1976 is lipidated: S-palmitoyl cysteine; by host. An intramembrane segment occupies Ser-1977 to Met-2007. The Cytoplasmic segment spans residues Pro-2008–Arg-3012. Zn(2+)-binding residues include Cys-2015, Cys-2033, Cys-2035, and Cys-2056. An FKBP8-binding region spans residues Glu-2124–Ala-2212. The segment at Glu-2124–Ala-2332 is transcriptional activation. The segment at Pro-2139–Pro-2143 is interaction with non-structural protein 4A. The interval Arg-2192–Pro-2213 is disordered. The tract at residues Arg-2193 to Glu-2460 is interaction with host SKP2. Residues Ser-2198, Ser-2201, Ser-2205, Ser-2208, Ser-2211, and Ser-2214 each carry the phosphoserine; by host modification. Low complexity predominate over residues Ser-2198–Pro-2213. Residues Ser-2214–Lys-2249 are ISDR. The interaction with EIF2AK2/PKR stretch occupies residues Ser-2214–Leu-2275. The interval Lys-2249–Tyr-2306 is NS4B-binding. Residues Glu-2299–Pro-2377 form a V3 region. The SH3-binding motif lies at Ala-2322–Pro-2325. The short motif at Pro-2327–Leu-2335 is the Nuclear localization signal element. Lys-2350 is covalently cross-linked (Glycyl lysine isopeptide (Lys-Gly) (interchain with G-Cter in ubiquitin)). A disordered region spans residues Pro-2354 to Thr-2431. The segment covering Leu-2355 to Ser-2391 has biased composition (polar residues). 2 positions are modified to phosphoserine; by host: Ser-2471 and Ser-2484. Residues Pro-2656 to Asp-2774 form the RdRp catalytic domain. Residues Asp-2662, Asp-2760, and Asp-2761 each contribute to the Mg(2+) site. The helical transmembrane segment at Leu-3013–Arg-3033 threads the bilayer.

Belongs to the hepacivirus polyprotein family. As to quaternary structure, homooligomer. Interacts with E1 (via C-terminus). Interacts with the non-structural protein 5A. Interacts (via N-terminus) with host STAT1 (via SH2 domain); this interaction results in decreased STAT1 phosphorylation and ubiquitin-mediated proteasome-dependent STAT1 degradation, leading to decreased IFN-stimulated gene transcription. Interacts with host STAT3; this interaction constitutively activates STAT3. Interacts with host LTBR receptor. Interacts with host TNFRSF1A receptor and possibly induces apoptosis. Interacts with host HNRPK. Interacts with host YWHAE. Interacts with host UBE3A/E6AP. Interacts with host DDX3X. Interacts with host APOA2. Interacts with host RXRA protein. Interacts with host SP110 isoform 3/Sp110b; this interaction sequesters the transcriptional corepressor SP110 away from the nucleus. Interacts with host CREB3 nuclear transcription protein; this interaction triggers cell transformation. Interacts with host ACY3. Interacts with host C1QR1. Interacts with host RBM24; this interaction, which enhances the interaction of the mature core protein with 5'-UTR, may inhibit viral translation and favor replication. Interacts with host EIF2AK2/PKR; this interaction induces the autophosphorylation of EIF2AK2. Part of the viral assembly initiation complex composed of NS2, E1, E2, NS3, NS4A, NS5A and the mature core protein. In terms of assembly, forms a heterodimer with envelope glycoprotein E2. Interacts with mature core protein. Interacts with protease NS2. The heterodimer E1/E2 interacts with host CLDN1; this interaction plays a role in viral entry into host cell. Interacts with host SPSB2 (via C-terminus). Part of the viral assembly initiation complex composed of NS2, E1, E2, NS3, NS4A, NS5A and the mature core protein. Interacts with host NEURL3; this interaction prevents E1 binding to glycoprotein E2. Forms a heterodimer with envelope glycoprotein E1. Interacts with host CD81 and SCARB1 receptors; these interactions play a role in viral entry into host cell. Interacts with host EIF2AK2/PKR; this interaction inhibits EIF2AK2 and probably allows the virus to evade the innate immune response. Interacts with host CD209/DC-SIGN and CLEC4M/DC-SIGNR. Interact with host SPCS1; this interaction is essential for viral particle assembly. Interacts with protease NS2. The heterodimer E1/E2 interacts with host CLDN1; this interaction plays a role in viral entry into host cell. Part of the viral assembly initiation complex composed of NS2, E1, E2, NS3, NS4A, NS5A and the mature core protein. Interacts with host SLC3A2/4F2hc; the interaction may facilitate viral entry into host cell. Interacts with human PLSCR1. As to quaternary structure, homohexamer. Homoheptamer. Interacts with protease NS2. In terms of assembly, homodimer. Interacts with host SPCS1; this interaction is essential for viral particle assembly. Interacts with envelope glycoprotein E1. Interacts with envelope glycoprotein E2. Interacts with viroporin p7. Interacts with serine protease/helicase NS3. Part of the replication complex composed of NS2, NS3, NS4A, NS4B, NS5A and the RNA-directed RNA polymerase embedded in an ER-derived membranous web. Part of the viral assembly initiation complex composed of NS2, E1, E2, NS3, NS4A, NS5A and the mature core protein. Interacts with protease NS2. Interacts with non-structural protein 4A; this interaction stabilizes the folding of NS3 serine protease. NS3-NS4A interaction is essential for NS3 activation and allows membrane anchorage of the latter. NS3/NS4A complex also prevents phosphorylation of host IRF3, thus preventing the establishment of dsRNA induced antiviral state. Interacts with host MAVS; this interaction leads to the cleavage and inhibition of host MAVS. Interacts with host TICAM1; this interaction leads to the cleavage and inhibition of host TICAM1. Interacts with host TANK-binding kinase/TBK1; this interaction results in the inhibition of the association between TBK1 and IRF3, which leads to the inhibition of IRF3 activation. Interacts with host RBM24. Part of the replication complex composed of NS2, NS3, NS4A, NS4B, NS5A and the RNA-directed RNA polymerase embedded in an ER-derived membranous web. Part of the viral assembly initiation complex composed of NS2, E1, E2, NS3, NS4A, NS5A and the mature core protein. As to quaternary structure, interacts with NS3 serine protease; this interaction stabilizes the folding of NS3 serine protease. NS3-NS4A interaction is essential for NS3 activation and allows membrane anchorage of the latter. Interacts with non-structural protein 5A (via N-terminus). Part of the replication complex composed of NS2, NS3, NS4A, NS4B, NS5A and the RNA-directed RNA polymerase embedded in an ER-derived membranous web. Part of the viral assembly initiation complex composed of NS2, E1, E2, NS3, NS4A, NS5A and the mature core protein. In terms of assembly, homomultimer. Interacts with non-structural protein NS5A. Interacts with host PLA2G4C; this interaction likely initiates the recruitment of replication complexes to lipid droplets. Interacts with host STING; this interaction disrupts the interaction between STING and TBK1 thereby suppressing the interferon signaling. Part of the replication complex composed of NS2, NS3, NS4A, NS4B, NS5A and the RNA-directed RNA polymerase embedded in an ER-derived membranous web. Monomer. Homodimer; dimerization is required for RNA-binding. Interacts with the mature core protein. Interacts (via N-terminus) with non-structural protein 4A. Interacts with non-structural protein 4B. Interacts (via region D2) with RNA-directed RNA polymerase. Part of the viral assembly initiation complex composed of NS2, E1, E2, NS3, NS4A, NS5A and the mature core protein. Part of the replication complex composed of NS2, NS3, NS4A, NS4B, NS5A and the RNA-directed RNA polymerase embedded in an ER-derived membranous web. Interacts with host GRB2. Interacts with host BIN1. Interacts with host PIK3R1. Interacts with host SRCAP. Interacts with host FKBP8. Interacts (via C-terminus) with host VAPB (via MSP domain). Interacts with host EIF2AK2/PKR; this interaction leads to disruption of EIF2AK2 dimerization by NS5A and probably allows the virus to evade the innate immune response. Interacts (via N-terminus) with host PACSIN2 (via N-terminus); this interaction attenuates protein kinase C alpha-mediated phosphorylation of PACSIN2 by disrupting the interaction between PACSIN2 and PRKCA. Interacts (via N-terminus) with host SRC kinase (via SH2 domain). Interacts with most Src-family kinases. Interacts with host IFI27 and SKP2; promotes the ubiquitin-mediated proteasomal degradation of NS5A. Interacts with host GPS2. Interacts with host TNFRSF21; this interaction allows the modulation by the virus of JNK, p38 MAPK, STAT3, and Akt signaling pathways in a DR6-dependent manner. Interacts (via N-terminus) with host CIDEB (via N-terminus); this interaction seems to regulate the association of HCV particles with APOE. Interacts with host CHKA/Choline Kinase-alpha; CHKA bridges host PI4KA and NS5A and potentiates NS5A-stimulated PI4KA activity, which then facilitates the targeting of the ternary complex to the ER for viral replication. Interacts with host SPSB2 (via C-terminus); this interaction targets NS5A for ubiquitination and degradation. Interacts with host RAB18; this interaction may promote the association of NS5A and other replicase components with lipid droplets. Interacts (via region D2) with host PPIA/CYPA; the interaction stimulates RNA-binding ability of NS5A and is dependent on the peptidyl-prolyl cis-trans isomerase activity of PPIA/CYPA. Interacts with host TRIM14; this interaction induces the degradation of NS5A. As to quaternary structure, homooligomer. Interacts with non-structural protein 5A. Interacts with host VAPB. Interacts with host PRK2/PKN2. Interacts with host HNRNPA1 and SEPT6; these interactions facilitate viral replication. Part of the replication complex composed of NS2, NS3, NS4A, NS4B, NS5A and the RNA-directed RNA polymerase. Zn(2+) serves as cofactor. Requires Mg(2+) as cofactor. Specific enzymatic cleavages in vivo yield mature proteins. The structural proteins, core, E1, E2 and p7 are produced by proteolytic processing by host signal peptidases. The core protein precursor is synthesized as a 23 kDa, which is retained in the ER membrane through the hydrophobic signal peptide. Cleavage by the signal peptidase releases the 21 kDa mature core protein. The cleavage of the core protein precursor occurs between aminoacids 176 and 188 but the exact cleavage site is not known. Some degraded forms of the core protein appear as well during the course of infection. The other proteins (p7, NS2, NS3, NS4A, NS4B, NS5A and NS5B) are cleaved by the viral proteases. Autoprocessing between NS2 and NS3 is mediated by the NS2 cysteine protease catalytic domain and regulated by the NS3 N-terminal domain. Post-translationally, phosphorylated by host PKC and PKA. In terms of processing, ubiquitinated; mediated by UBE3A and leading to core protein subsequent proteasomal degradation. Highly N-glycosylated. Post-translationally, palmitoylation is required for NS2/3 autoprocessing and E2 recruitment to membranes. In terms of processing, palmitoylated. This modification may play a role in its polymerization or in protein-protein interactions. Phosphorylated on serines in a basal form termed p56. p58 is a hyperphosphorylated form of p56. p56 and p58 coexist in the cell in roughly equivalent amounts. Hyperphosphorylation is dependent on the presence of NS4A. Host CSNK1A1/CKI-alpha or RPS6KB1 kinases may be responsible for NS5A phosphorylation. Post-translationally, tyrosine phosphorylation is essential for the interaction with host SRC. In terms of processing, ubiquitinated. Ubiquitination, most probably at Lys-2350, mediated by host IFI27 and SKP2 leads to proteasomal degradation, restricting viral infection. Ubiquitination by host TRIM22 leads to interruption of viral replication. The N-terminus is phosphorylated by host PRK2/PKN2.

It localises to the host endoplasmic reticulum membrane. Its subcellular location is the host mitochondrion membrane. The protein localises to the virion. The protein resides in the host cytoplasm. It is found in the host nucleus. It localises to the host lipid droplet. Its subcellular location is the virion membrane. The protein localises to the host mitochondrion. The protein resides in the host cell membrane. It is found in the host perinuclear region. It catalyses the reaction Hydrolysis of four peptide bonds in the viral precursor polyprotein, commonly with Asp or Glu in the P6 position, Cys or Thr in P1 and Ser or Ala in P1'.. It carries out the reaction a ribonucleoside 5'-triphosphate + H2O = a ribonucleoside 5'-diphosphate + phosphate + H(+). The catalysed reaction is ATP + H2O = ADP + phosphate + H(+). The enzyme catalyses RNA(n) + a ribonucleoside 5'-triphosphate = RNA(n+1) + diphosphate. Inhibited by the antiviral drug hexamethylene amiloride. Inhibition by amantadine appears to be genotype-dependent. Also inhibited by long-alkyl-chain iminosugar derivatives. With respect to regulation, activity is up-regulated by PRK2/PKN2-mediated phosphorylation. Functionally, packages viral RNA to form a viral nucleocapsid, and promotes virion budding. Participates in the viral particle production as a result of its interaction with the non-structural protein 5A. Binds RNA and may function as a RNA chaperone to induce the RNA structural rearrangements taking place during virus replication. Modulates viral translation initiation by interacting with viral IRES and 40S ribosomal subunit. Affects various cell signaling pathways, host immunity and lipid metabolism. Prevents the establishment of cellular antiviral state by blocking the interferon-alpha/beta (IFN-alpha/beta) and IFN-gamma signaling pathways and by blocking the formation of phosphorylated STAT1 and promoting ubiquitin-mediated proteasome-dependent degradation of STAT1. Activates STAT3 leading to cellular transformation. Regulates the activity of cellular genes, including c-myc and c-fos. May repress the promoter of p53, and sequester CREB3 and SP110 isoform 3/Sp110b in the cytoplasm. Represses cell cycle negative regulating factor CDKN1A, thereby interrupting an important check point of normal cell cycle regulation. Targets transcription factors involved in the regulation of inflammatory responses and in the immune response: suppresses TNF-induced NF-kappa-B activation, and activates AP-1. Binds to dendritic cells (DCs) via C1QR1, resulting in down-regulation of T-lymphocytes proliferation. Alters lipid metabolism by interacting with hepatocellular proteins involved in lipid accumulation and storage. Induces up-regulation of FAS promoter activity, and thereby contributes to the increased triglyceride accumulation in hepatocytes (steatosis). Forms a heterodimer with envelope glycoprotein E2, which mediates virus attachment to the host cell, virion internalization through clathrin-dependent endocytosis and fusion with host membrane. Fusion with the host cell is most likely mediated by both E1 and E2, through conformational rearrangements of the heterodimer required for fusion rather than a classical class II fusion mechanism. E1/E2 heterodimer binds host apolipoproteins such as APOB and ApoE thereby forming a lipo-viro-particle (LVP). APOE associated to the LVP allows the initial virus attachment to cell surface receptors such as the heparan sulfate proteoglycans (HSPGs), syndecan-1 (SDC1), syndecan-1 (SDC2), the low-density lipoprotein receptor (LDLR) and scavenger receptor class B type I (SCARB1). The cholesterol transfer activity of SCARB1 allows E2 exposure and binding of E2 to SCARB1 and the tetraspanin CD81. E1/E2 heterodimer binding on CD81 activates the epithelial growth factor receptor (EGFR) signaling pathway. Diffusion of the complex E1-E2-EGFR-SCARB1-CD81 to the cell lateral membrane allows further interaction with Claudin 1 (CLDN1) and occludin (OCLN) to finally trigger HCV entry. In terms of biological role, forms a heterodimer with envelope glycoprotein E1, which mediates virus attachment to the host cell, virion internalization through clathrin-dependent endocytosis and fusion with host membrane. Fusion with the host cell is most likely mediated by both E1 and E2, through conformational rearrangements of the heterodimer required for fusion rather than a classical class II fusion mechanism. The interaction between envelope glycoprotein E2 and host apolipoprotein E/APOE allows the proper assembly, maturation and infectivity of the viral particles. This interaction is probably promoted via the up-regulation of cellular autophagy by the virus. E1/E2 heterodimer binds host apolipoproteins such as APOB and APOE thereby forming a lipo-viro-particle (LVP). APOE associated to the LVP allows the initial virus attachment to cell surface receptors such as the heparan sulfate proteoglycans (HSPGs), syndecan-1 (SDC1), syndecan-1 (SDC2), the low-density lipoprotein receptor (LDLR) and scavenger receptor class B type I (SCARB1). The cholesterol transfer activity of SCARB1 allows E2 exposure and binding of E2 to SCARB1 and the tetraspanin CD81. E1/E2 heterodimer binding on CD81 activates the epithelial growth factor receptor (EGFR) signaling pathway. Diffusion of the complex E1-E2-EGFR-SCARB1-CD81 to the cell lateral membrane allows further interaction with Claudin 1 (CLDN1) and occludin (OCLN) to finally trigger HCV entry. Inhibits host EIF2AK2/PKR activation, preventing the establishment of an antiviral state. Viral ligand for CD209/DC-SIGN and CLEC4M/DC-SIGNR, which are respectively found on dendritic cells (DCs), and on liver sinusoidal endothelial cells and macrophage-like cells of lymph node sinuses. These interactions allow the capture of circulating HCV particles by these cells and subsequent facilitated transmission to permissive cells such as hepatocytes and lymphocyte subpopulations. The interaction between E2 and host amino acid transporter complex formed by SLC3A2 and SLC7A5/LAT1 may facilitate viral entry into host cell. Its function is as follows. Ion channel protein that acts as a viroporin and plays an essential role in the assembly, envelopment and secretion of viral particles. Regulates the host cell secretory pathway, which induces the intracellular retention of viral glycoproteins and favors assembly of viral particles. Creates a pore in acidic organelles and releases Ca(2+) and H(+) in the cytoplasm of infected cells, leading to a productive viral infection. High levels of cytoplasmic Ca(2+) may trigger membrane trafficking and transport of viral ER-associated proteins to viroplasms, sites of viral genome replication. This ionic imbalance induces the assembly of the inflammasome complex, which triggers the maturation of pro-IL-1beta into IL-1beta through the action of caspase-1. Targets also host mitochondria and induces mitochondrial depolarization. In addition of its role as a viroporin, acts as a lipid raft adhesion factor. Functionally, cysteine protease required for the proteolytic auto-cleavage between the non-structural proteins NS2 and NS3. The N-terminus of NS3 is required for the function of NS2 protease (active region NS2-3). Promotes the initiation of viral particle assembly by mediating the interaction between structural and non-structural proteins. Displays three enzymatic activities: serine protease with a chymotrypsin-like fold, NTPase and RNA helicase. NS3 serine protease, in association with NS4A, is responsible for the cleavages of NS3-NS4A, NS4A-NS4B, NS4B-NS5A and NS5A-NS5B. The NS3/NS4A complex prevents phosphorylation of host IRF3, thus preventing the establishment of dsRNA induced antiviral state. The NS3/NS4A complex induces host amino acid transporter component SLC3A2, thus contributing to HCV propagation. NS3 RNA helicase binds to RNA and unwinds both dsDNA and dsRNA in the 3' to 5' direction, and likely resolves RNA complicated stable secondary structures in the template strand. Binds a single ATP and catalyzes the unzipping of a single base pair of dsRNA. Inhibits host antiviral proteins TBK1 and IRF3 thereby preventing the establishment of an antiviral state. Cleaves host MAVS/CARDIF thereby preventing the establishment of an antiviral state. Cleaves host TICAM1/TRIF, thereby disrupting TLR3 signaling and preventing the establishment of an antiviral state. In terms of biological role, induces a specific membrane alteration that serves as a scaffold for the virus replication complex. This membrane alteration gives rise to the so-called ER-derived membranous web that contains the replication complex. NS4B self-interaction contributes to its function in membranous web formation. Promotes host TRIF protein degradation in a CASP8-dependent manner thereby inhibiting host TLR3-mediated interferon signaling. Disrupts the interaction between STING and TBK1 contributing to the inhibition of interferon signaling. Its function is as follows. Phosphorylated protein that is indispensable for viral replication and assembly. Both hypo- and hyperphosphorylated states are required for the viral life cycle. The hyperphosphorylated form of NS5A is an inhibitor of viral replication. Involved in RNA-binding and especially in binding to the viral genome. Zinc is essential for RNA-binding. Participates in the viral particle production as a result of its interaction with the mature viral core protein. Its interaction with host VAPB may target the viral replication complex to vesicles. Down-regulates viral IRES translation initiation. Mediates interferon resistance, presumably by interacting with and inhibiting host EIF2AK2/PKR. Prevents BIN1-induced apoptosis. Acts as a transcriptional activator of some host genes important for viral replication when localized in the nucleus. Via the interaction with host PACSIN2, modulates lipid droplet formation in order to promote virion assembly. Modulates TNFRSF21/DR6 signaling pathway for viral propagation. Functionally, RNA-dependent RNA polymerase that performs primer-template recognition and RNA synthesis during viral replication. Initiates RNA transcription/replication at a flavin adenine dinucleotide (FAD), resulting in a 5'- FAD cap on viral RNAs. In this way, recognition of viral 5' RNA by host pattern recognition receptors can be bypassed, thereby evading activation of antiviral pathways. The sequence is that of Genome polyprotein from Hepatitis C virus genotype 2b (isolate JPUT971017) (HCV).